The chain runs to 107 residues: Putative ATP synthase subunit f, mitochondrial (107 aa).

Belongs to the ATPase F chain family. F-type ATPases have 2 components, CF(1) - the catalytic core - and CF(0) - the membrane proton channel. CF(0) seems to have nine subunits: a, b, c, d, e, f, g, F6 and 8 (or A6L).

It is found in the mitochondrion membrane. In terms of biological role, mitochondrial membrane ATP synthase (F(1)F(0) ATP synthase or Complex V) produces ATP from ADP in the presence of a proton gradient across the membrane which is generated by electron transport complexes of the respiratory chain. F-type ATPases consist of two structural domains, F(1) - containing the extramembraneous catalytic core and F(0) - containing the membrane proton channel, linked together by a central stalk and a peripheral stalk. During catalysis, ATP synthesis in the catalytic domain of F(1) is coupled via a rotary mechanism of the central stalk subunits to proton translocation. Part of the complex F(0) domain. Minor subunit located with subunit a in the membrane. The polypeptide is Putative ATP synthase subunit f, mitochondrial (Drosophila melanogaster (Fruit fly)).